Here is an 88-residue protein sequence, read N- to C-terminus: uncharacterized protein (88 aa).

Helical transmembrane passes span 13–33 (FLAF…GWGP) and 62–82 (WFNI…ITGI).

It localises to the cell membrane. This is an uncharacterized protein from Bacillus subtilis (strain 168).